We begin with the raw amino-acid sequence, 103 residues long: Small ribosomal subunit protein uS10 (103 aa).

It belongs to the universal ribosomal protein uS10 family. Part of the 30S ribosomal subunit.

Its function is as follows. Involved in the binding of tRNA to the ribosomes. The sequence is that of Small ribosomal subunit protein uS10 from Campylobacter hominis (strain ATCC BAA-381 / DSM 21671 / CCUG 45161 / LMG 19568 / NCTC 13146 / CH001A).